A 155-amino-acid chain; its full sequence is Protein E6 (155 aa).

Zinc fingers lie at residues 33 to 69 (CVYC…CRVC) and 106 to 142 (CYRC…CLQC).

This sequence belongs to the papillomaviridae E6 protein family. As to quaternary structure, forms homodimers. Interacts with ubiquitin-protein ligase UBE3A/E6-AP; this interaction stimulates UBE3A ubiquitin activity. Interacts with host TP53 and EP300; this interaction inhibits TP53 activity.

The protein localises to the host cytoplasm. The protein resides in the host nucleus. In terms of biological role, plays a major role in the induction and maintenance of cellular transformation. E6 associates with host UBE3A/E6-AP ubiquitin-protein ligase and modulates its activity. Sequesters tumor suppressor TP53 in the host cytoplasm and modulates its activity by interacting with host EP300 that results in the reduction of TP53 acetylation and activation. In turn, apoptosis induced by DNA damage is inhibited. E6 also protects host keratinocytes from apoptosis by mediating the degradation of host BAK1. May also inhibit host immune response. This Homo sapiens (Human) protein is Protein E6.